The primary structure comprises 460 residues: Cysteine--tRNA ligase (460 aa).

Cys-29 lines the Zn(2+) pocket. The 'HIGH' region signature appears at Ala-31–His-41. Zn(2+)-binding residues include Cys-212, His-237, and Glu-241. A 'KMSKS' region motif is present at residues Lys-268 to Ser-272. Lys-271 is an ATP binding site.

This sequence belongs to the class-I aminoacyl-tRNA synthetase family. As to quaternary structure, monomer. Zn(2+) serves as cofactor.

Its subcellular location is the cytoplasm. The enzyme catalyses tRNA(Cys) + L-cysteine + ATP = L-cysteinyl-tRNA(Cys) + AMP + diphosphate. In Corynebacterium glutamicum (strain R), this protein is Cysteine--tRNA ligase.